Here is an 81-residue protein sequence, read N- to C-terminus: Small ribosomal subunit protein uS17 (81 aa).

The protein belongs to the universal ribosomal protein uS17 family. In terms of assembly, part of the 30S ribosomal subunit.

Functionally, one of the primary rRNA binding proteins, it binds specifically to the 5'-end of 16S ribosomal RNA. The polypeptide is Small ribosomal subunit protein uS17 (Protochlamydia amoebophila (strain UWE25)).